We begin with the raw amino-acid sequence, 222 residues long: Peptide methionine sulfoxide reductase MsrA 2 (222 aa).

The active site involves cysteine 56.

It belongs to the MsrA Met sulfoxide reductase family.

It carries out the reaction L-methionyl-[protein] + [thioredoxin]-disulfide + H2O = L-methionyl-(S)-S-oxide-[protein] + [thioredoxin]-dithiol. It catalyses the reaction [thioredoxin]-disulfide + L-methionine + H2O = L-methionine (S)-S-oxide + [thioredoxin]-dithiol. Its function is as follows. Has an important function as a repair enzyme for proteins that have been inactivated by oxidation. Catalyzes the reversible oxidation-reduction of methionine sulfoxide in proteins to methionine. The sequence is that of Peptide methionine sulfoxide reductase MsrA 2 (msrA2) from Nostoc sp. (strain PCC 7120 / SAG 25.82 / UTEX 2576).